The primary structure comprises 574 residues: Lysyl oxidase homolog 1 (574 aa).

The N-terminal stretch at Met1–Gly25 is a signal peptide. A propeptide spanning residues Gln26–Arg95 is cleaved from the precursor. Disordered stretches follow at residues Val62–Gln123 and Gly239–Pro374. Positions Arg86–Gln96 are enriched in basic residues. Pro residues-rich tracts occupy residues Pro255–Asp268 and Tyr313–Leu332. The segment at Pro311–Leu369 is interaction with FBLN5. Residues Pro370–Ser574 are lysyl-oxidase like. 5 cysteine pairs are disulfide-bonded: Cys395-Cys401, Cys448-Cys497, Cys481-Cys487, Cys508-Cys518, and Cys555-Cys569. Cu cation is bound by residues His449, His451, and His453. The lysine tyrosylquinone (Lys-Tyr); alternate cross-link spans Lys477–Tyr512. Tyr512 is subject to 2',4',5'-topaquinone; alternate.

Belongs to the lysyl oxidase family. Interacts (via propeptide) with EFEMP2. Interacts with FBLN5. The cofactor is Cu cation. It depends on lysine tyrosylquinone residue as a cofactor. In terms of processing, the lysine tyrosylquinone cross-link (LTQ) is generated by condensation of the epsilon-amino group of a lysine with a topaquinone produced by oxidation of tyrosine. Post-translationally, proteolytic processing by a furin-like protease causes removal of N-terminal propeptide resulting in an enzyme largely inactive, but further proteolytic processing by BMP1 results in enzyme activation. In terms of tissue distribution, expressed in ocular tissues including the iris, ciliary body, lens and optic nerve. Not detected in the retina.

It is found in the secreted. It localises to the extracellular space. The protein localises to the extracellular matrix. The catalysed reaction is L-lysyl-[protein] + O2 + H2O = (S)-2-amino-6-oxohexanoyl-[protein] + H2O2 + NH4(+). Catalyzes the oxidative deamination of lysine and hydroxylysine residues in collagen and elastin, resulting in the formation of covalent cross-linkages, and the stabilization of collagen and elastin fibers. Essential for the elastic fiber homeostasis and for their maintenance at adult age. The chain is Lysyl oxidase homolog 1 (LOXL1) from Homo sapiens (Human).